The chain runs to 772 residues: MKFYIDDLPILFPYPRIYPEQYQYMCDLKHSLDAGGIALLEMPSGTGKTISLLSLIVSYQQHYPEHRKLIYCSRTMSEIDKALAELKRLMAYRTSQLGYEEPFLGLGLTSRKNLCLHPSVRREKNGNVVDARCRSLTAGFVREQRLAGMDVPTCEFHDNLEDLEPHSLISNGVWTLDDITEYGEKTTRCPYFTVRRMLPFCNVIIYSYHYLLDPKIAERVSRELSKDCIVVFDEAHNIDNVCIESLSIDLTESSLRKASKSILSLEQKVNEVKQSDSKKLQDEYQKLVRGLQDANAANDEDQFMANPVLPEDVLKEAVPGNIRRAEHFIAFLKRFVEYLKTRMKVLHVIAETPTSFLQHVKDITFIDKKPLRFCAERLTSLVRALQISLVEDFHSLQQVVAFATLVATYERGFILILEPFETENATVPNPILRFSCLDASIAIKPVFERFRSVIITSGTLSPLDMYPKMLQFNTVMQESYGMSLARNCFLPMVVTRGSDQVAISSKFEARNDPSVVRNYGNILVEFSKITPDGLVAFFPSYLYLESIVSSWQSMGILDEVWKYKLILVETPDPHETTLALETYRAACSNGRGAVLLSVARGKVSEGVDFDHHYGRAVIMFGIPYQYTESRVLKARLEFLRDTYQIREADFLTFDAMRHAAQCLGRVLRGKDDHGIMVLADKRYGRSDKRTKLPKWIQQYITEGATNLSTDMSLALAKKFLRTMAQPFTASDQEGISWWSLDDLLIHQKKALKSAAIEQSKHEDEMDIDVVET.

A Helicase ATP-binding domain is found at 7–283 (DLPILFPYPR…QSDSKKLQDE (277 aa)). 42 to 49 (MPSGTGKT) lines the ATP pocket. Positions 115, 133, 154, and 189 each coordinate [4Fe-4S] cluster. The DEAH box signature appears at 233-236 (DEAH).

This sequence belongs to the helicase family. RAD3/XPD subfamily. Component of the 7-subunit TFIIH core complex composed of XPB/ptr8, XPD/rad15, ssl1, tfb1, tfb2, tfb4 and tfb5, which is active in NER. The core complex associates with the 3-subunit CTD-kinase module TFIIK composed of mcs2/cyclin H, mcs6/cdk7 and pmh1/tfb3 to form the 10-subunit holoenzyme (holo-TFIIH) active in transcription. The cofactor is [4Fe-4S] cluster.

The protein localises to the nucleus. It catalyses the reaction Couples ATP hydrolysis with the unwinding of duplex DNA at the replication fork by translocating in the 5'-3' direction. This creates two antiparallel DNA single strands (ssDNA). The leading ssDNA polymer is the template for DNA polymerase III holoenzyme which synthesizes a continuous strand.. The enzyme catalyses ATP + H2O = ADP + phosphate + H(+). In terms of biological role, ATP-dependent 5'-3' DNA helicase, component of the general transcription and DNA repair factor IIH (TFIIH) core complex, which is involved in general and transcription-coupled nucleotide excision repair (NER) of damaged DNA and, when complexed to TFIIK, in RNA transcription by RNA polymerase II. In NER, TFIIH acts by opening DNA around the lesion to allow the excision of the damaged oligonucleotide and its replacement by a new DNA fragment. The ATP-dependent helicase activity of XPD/rad15 is required for DNA opening. In transcription, TFIIH has an essential role in transcription initiation. When the pre-initiation complex (PIC) has been established, TFIIH is required for promoter opening and promoter escape. Phosphorylation of the C-terminal tail (CTD) of the largest subunit of RNA polymerase II by the kinase module TFIIK controls the initiation of transcription. XPD/rad15 acts by forming a bridge between TFIIK and the core-TFIIH complex. Involved in the maintenance of the fidelity of DNA replication. The chain is General transcription and DNA repair factor IIH helicase subunit XPD from Schizosaccharomyces pombe (strain 972 / ATCC 24843) (Fission yeast).